A 183-amino-acid chain; its full sequence is Holliday junction branch migration complex subunit RuvA (183 aa).

The domain I stretch occupies residues 1-64 (MVVGIEGIIT…EDSNKFYGFL (64 aa)). Residues 65-139 (DKDEQKMFEM…DTKTKLENVS (75 aa)) form a domain II region. A region of interest (flexible linker) is located at residue Ser-139. The tract at residues 139 to 183 (SDDKSEALAALLTLGFKQEKIISVLASAQATGTSELIKEALKKLG) is domain III.

This sequence belongs to the RuvA family. Homotetramer. Forms an RuvA(8)-RuvB(12)-Holliday junction (HJ) complex. HJ DNA is sandwiched between 2 RuvA tetramers; dsDNA enters through RuvA and exits via RuvB. An RuvB hexamer assembles on each DNA strand where it exits the tetramer. Each RuvB hexamer is contacted by two RuvA subunits (via domain III) on 2 adjacent RuvB subunits; this complex drives branch migration. In the full resolvosome a probable DNA-RuvA(4)-RuvB(12)-RuvC(2) complex forms which resolves the HJ.

The protein resides in the cytoplasm. In terms of biological role, the RuvA-RuvB-RuvC complex processes Holliday junction (HJ) DNA during genetic recombination and DNA repair, while the RuvA-RuvB complex plays an important role in the rescue of blocked DNA replication forks via replication fork reversal (RFR). RuvA specifically binds to HJ cruciform DNA, conferring on it an open structure. The RuvB hexamer acts as an ATP-dependent pump, pulling dsDNA into and through the RuvAB complex. HJ branch migration allows RuvC to scan DNA until it finds its consensus sequence, where it cleaves and resolves the cruciform DNA. In Campylobacter jejuni subsp. jejuni serotype O:23/36 (strain 81-176), this protein is Holliday junction branch migration complex subunit RuvA.